A 396-amino-acid polypeptide reads, in one-letter code: Elongation factor Tu (396 aa).

The tr-type G domain occupies 10-206 (KPHVNVGTIG…ALDSYIPEPE (197 aa)). Residues 19 to 26 (GHVDHGKT) are G1. Residue 19-26 (GHVDHGKT) participates in GTP binding. Thr26 serves as a coordination point for Mg(2+). The interval 60 to 64 (GITIN) is G2. The tract at residues 81 to 84 (DCPG) is G3. Residues 81 to 85 (DCPGH) and 136 to 139 (NKCD) each bind GTP. Residues 136 to 139 (NKCD) form a G4 region. The segment at 174–176 (SAL) is G5.

Belongs to the TRAFAC class translation factor GTPase superfamily. Classic translation factor GTPase family. EF-Tu/EF-1A subfamily. As to quaternary structure, monomer.

It localises to the cytoplasm. It carries out the reaction GTP + H2O = GDP + phosphate + H(+). GTP hydrolase that promotes the GTP-dependent binding of aminoacyl-tRNA to the A-site of ribosomes during protein biosynthesis. This Acinetobacter baumannii (strain ATCC 17978 / DSM 105126 / CIP 53.77 / LMG 1025 / NCDC KC755 / 5377) protein is Elongation factor Tu.